Reading from the N-terminus, the 193-residue chain is Cryptic protein (193 aa).

Positions 1-25 (MFWRKHVRILFTVTLIWQAIHLGKG) are cleaved as a signal peptide. 2 N-linked (GlcNAc...) asparagine glycosylation sites follow: asparagine 38 and asparagine 60. Cystine bridges form between cysteine 91/cysteine 103 and cysteine 105/cysteine 114. Positions 91–115 (CQNGGTCILGAFCACPKHFSGRHCE) constitute an EGF-like domain.

It belongs to the EGF-CFC (Cripto-1/FRL1/Cryptic) family.

Its subcellular location is the cell membrane. It localises to the secreted. In terms of biological role, may play a role in mesoderm and/or neural patterning during gastrulation. This is Cryptic protein (CFC1) from Gallus gallus (Chicken).